Here is a 54-residue protein sequence, read N- to C-terminus: Large ribosomal subunit protein bL33B (54 aa).

This sequence belongs to the bacterial ribosomal protein bL33 family.

The protein is Large ribosomal subunit protein bL33B of Mycolicibacterium vanbaalenii (strain DSM 7251 / JCM 13017 / BCRC 16820 / KCTC 9966 / NRRL B-24157 / PYR-1) (Mycobacterium vanbaalenii).